A 153-amino-acid chain; its full sequence is Large ribosomal subunit protein uL23m (153 aa).

A disordered region spans residues 131–153 (MADEQQRQGSDPQRGGVPNWFSL).

This sequence belongs to the universal ribosomal protein uL23 family. Component of the mitochondrial ribosome large subunit (39S) which comprises a 16S rRNA and about 50 distinct proteins.

It is found in the mitochondrion. The sequence is that of Large ribosomal subunit protein uL23m (MRPL23) from Otolemur garnettii (Small-eared galago).